Consider the following 570-residue polypeptide: Guanine nucleotide-binding protein alpha-3 subunit (570 aa).

Residues Arg-10–Glu-113 enclose the PH domain. Residues Pro-144–Cys-570 form the G-alpha domain. The tract at residues Lys-147 to Thr-160 is G1 motif. Gly-152–Ser-159 is a binding site for GTP. Mg(2+) is bound at residue Ser-159. Low complexity-rich tracts occupy residues Asn-254–Ser-272 and Asn-290–Ser-316. The interval Asn-254–Asn-321 is disordered. Residues Asp-386–Thr-394 form a G2 motif region. GTP is bound by residues Leu-388–Thr-394, Asp-414–Gln-418, Asn-483–Asp-486, and Ala-544. Thr-394 contacts Mg(2+). The G3 motif stretch occupies residues Phe-410 to Arg-419. Residues Ile-479 to Asp-486 form a G4 motif region. The interval Thr-542–Thr-547 is G5 motif.

It belongs to the G-alpha family. In terms of assembly, g proteins are composed of 3 units; alpha, beta and gamma. The alpha chain contains the guanine nucleotide binding site.

Functionally, guanine nucleotide-binding proteins (G proteins) are involved as modulators or transducers in various transmembrane signaling systems. G alpha-3 plays a role in development. G alpha-3 mutants fail to aggregate. The polypeptide is Guanine nucleotide-binding protein alpha-3 subunit (gpaC) (Dictyostelium discoideum (Social amoeba)).